Reading from the N-terminus, the 152-residue chain is Nucleoside diphosphate kinase A (152 aa).

The ATP site is built by Lys-12, Phe-60, Arg-88, and Thr-94. Lys-100 is covalently cross-linked (Glycyl lysine isopeptide (Lys-Gly) (interchain with G-Cter in ubiquitin)). ATP-binding residues include Arg-105 and Asn-115. The active-site Pros-phosphohistidine intermediate is the His-118. Ser-120, Ser-122, and Ser-125 each carry phosphoserine.

It belongs to the NDK family. In terms of assembly, hexamer of two different chains: An and B (A6, A5B, A4B2, A3B3, A2B4, AB5, B6). Interacts with PRUNE1. Component of the SET complex, composed of at least ANP32A, APEX1, HMGB2, NME1, SET and TREX1. Within this complex, interacts directly with SET. Also interacts with TREX1, but only following translocation to the nucleus. Requires Mg(2+) as cofactor. In terms of tissue distribution, isoform 1 is expressed in heart, brain, placenta, lung, liver, skeletal muscle, pancreas, spleen and thymus. Expressed in lung carcinoma cell lines but not in normal lung tissues. Isoform 2 is ubiquitously expressed and its expression is also related to tumor differentiation.

It localises to the cytoplasm. The protein resides in the nucleus. The enzyme catalyses a 2'-deoxyribonucleoside 5'-diphosphate + ATP = a 2'-deoxyribonucleoside 5'-triphosphate + ADP. It carries out the reaction a ribonucleoside 5'-diphosphate + ATP = a ribonucleoside 5'-triphosphate + ADP. With respect to regulation, autophosphorylation at His-118 increases serine/threonine protein kinase activity of the enzyme. Interaction with the SET complex inhibits the endonuclease activity. Functionally, major role in the synthesis of nucleoside triphosphates other than ATP. The ATP gamma phosphate is transferred to the NDP beta phosphate via a ping-pong mechanism, using a phosphorylated active-site intermediate. Possesses nucleoside-diphosphate kinase, serine/threonine-specific protein kinase, geranyl and farnesyl pyrophosphate kinase, histidine protein kinase and 3'-5' exonuclease activities. Involved in cell proliferation, differentiation and development, signal transduction, G protein-coupled receptor endocytosis, and gene expression. Required for neural development including neural patterning and cell fate determination. During GZMA-mediated cell death, works in concert with TREX1. NME1 nicks one strand of DNA and TREX1 removes bases from the free 3' end to enhance DNA damage and prevent DNA end reannealing and rapid repair. The polypeptide is Nucleoside diphosphate kinase A (NME1) (Homo sapiens (Human)).